Reading from the N-terminus, the 134-residue chain is Small ribosomal subunit protein uS8c (134 aa).

It belongs to the universal ribosomal protein uS8 family. As to quaternary structure, part of the 30S ribosomal subunit.

Its subcellular location is the plastid. It is found in the chloroplast. Functionally, one of the primary rRNA binding proteins, it binds directly to 16S rRNA central domain where it helps coordinate assembly of the platform of the 30S subunit. This chain is Small ribosomal subunit protein uS8c (rps8), found in Draba nemorosa (Woodland whitlowgrass).